We begin with the raw amino-acid sequence, 318 residues long: Replication factor C small subunit (318 aa).

43-50 (GPAGTGKT) is an ATP binding site.

The protein belongs to the activator 1 small subunits family. RfcS subfamily. Heteromultimer composed of small subunits (RfcS) and large subunits (RfcL).

In terms of biological role, part of the RFC clamp loader complex which loads the PCNA sliding clamp onto DNA. This chain is Replication factor C small subunit, found in Picrophilus torridus (strain ATCC 700027 / DSM 9790 / JCM 10055 / NBRC 100828 / KAW 2/3).